We begin with the raw amino-acid sequence, 822 residues long: AP-1 complex subunit gamma-1 (822 aa).

Positions 597 to 628 are disordered; it reads EIVQTNGETEPAPLETKPPPSGPQPTSQANDL. The GAE domain occupies 702 to 817; sequence AGIPSITAYS…QDLAEVNNFP (116 aa).

It belongs to the adaptor complexes large subunit family. Adaptor protein complex 1 (AP-1) is a heterotetramer composed of two large adaptins (gamma-type subunit AP1G1 and beta-type subunit AP1B1), a medium adaptin (mu-type subunit AP1M1 or AP1M2) and a small adaptin (sigma-type subunit AP1S1 or AP1S2 or AP1S3). Interacts (via GAE domain) with RABEP1. Interacts with SYNRG/gamma-synergin. Interacts with EPS15. Interacts (via GAE domain) with AP1AR (via coiled-coil domain). Interacts with CLN3 (via dileucine motif); this interaction facilitates lysosomal targeting. Interacts (via GAE domain) with AFTPH/aftiphilin; the interaction is required to recruit AFTPH/aftiphilin to the perinuclear region of the cell. In terms of tissue distribution, widely expressed.

It localises to the golgi apparatus. Its subcellular location is the cytoplasmic vesicle. The protein localises to the clathrin-coated vesicle membrane. The protein resides in the cytoplasm. It is found in the perinuclear region. It localises to the clathrin-coated vesicle. Its subcellular location is the membrane. The protein localises to the clathrin-coated pit. Its function is as follows. Subunit of clathrin-associated adaptor protein complex 1 that plays a role in protein sorting in the late-Golgi/trans-Golgi network (TGN) and/or endosomes. The AP complexes mediate both the recruitment of clathrin to membranes and the recognition of sorting signals within the cytosolic tails of transmembrane cargo molecules. In association with AFTPH/aftiphilin in the aftiphilin/p200/gamma-synergin complex, involved in the trafficking of transferrin from early to recycling endosomes, and the membrane trafficking of furin and the lysosomal enzyme cathepsin D between the trans-Golgi network (TGN) and endosomes. This chain is AP-1 complex subunit gamma-1 (AP1G1), found in Homo sapiens (Human).